A 357-amino-acid chain; its full sequence is DNA replication and repair protein RecF (357 aa).

30 to 37 (GANGSGKT) serves as a coordination point for ATP.

This sequence belongs to the RecF family.

It localises to the cytoplasm. The RecF protein is involved in DNA metabolism; it is required for DNA replication and normal SOS inducibility. RecF binds preferentially to single-stranded, linear DNA. It also seems to bind ATP. In Cronobacter sakazakii (strain ATCC BAA-894) (Enterobacter sakazakii), this protein is DNA replication and repair protein RecF.